Consider the following 241-residue polypeptide: Viral CASP8 and FADD-like apoptosis regulator (241 aa).

DED domains follow at residues 8–78 (PSLP…SRFG) and 95–175 (RYRK…QLVE). The segment at 212-241 (CMPVQESSDSPELLRTPVQESSSDSPEQTT) is disordered. The span at 229–241 (VQESSSDSPEQTT) shows a compositional bias: polar residues.

In terms of assembly, associates with the death-inducing signaling complex (DISC) formed by TNFRSF6/FAS, FADD and CASP8. Interacts with FADD. Interacts with host TRAF2. Interacts with host NEMO/IKBKG (via N-terminus). Interacts with host SH3BP4; this interaction plays an important in the suppression of host autophagy.

It localises to the host cytoplasm. It is found in the host nucleus. Its function is as follows. Inhibits TNFRSF1A, TNFRSF6/FAS and TNFRSF12 induced apoptosis. Directs the degradation of host NFKBIB but not NFKBIA. Also suppresses host NF-kappa-B activation by interacting with and preventing ubiquitination of host NEMO/IKBKG, the NF-kappa-B essential modulator subunit of the IKK complex. Interferes with host CASP8/caspase-8 recruitment and activation at the death-inducing signaling complex (DISC). May lead to higher virus production and contribute to virus persistence and oncogenicity. Also participates in the inhibition of host autophagy by interacting with host SH3BP4. In Homo sapiens (Human), this protein is Viral CASP8 and FADD-like apoptosis regulator.